The sequence spans 140 residues: Putative pre-16S rRNA nuclease (140 aa).

The protein belongs to the YqgF nuclease family.

The protein localises to the cytoplasm. Its function is as follows. Could be a nuclease involved in processing of the 5'-end of pre-16S rRNA. This is Putative pre-16S rRNA nuclease from Vibrio vulnificus (strain CMCP6).